We begin with the raw amino-acid sequence, 360 residues long: MNKLALYCRAGFEKELAGEITDKAAQLGVFGFVNLTEQSGYVIFECYQANEADHLAREIKFEQLIFARQMIVVGELLEDLPTADRISPIIAQYKTLQPKHSSALFVETPDTNEAKALLTFCRKFTVPLRNSLKQEGWLTSSDNVKDSISLHILFIRPGCCYVGYAYNHNKSPFFMGIPRLKFPSDAPSRSTLKLEEAILTFIPINQEKKRFNEQMKGVDLGACPGGWTYQLVKRGLFVYAVDHGKIAATLHETGRIEHCVEDGFKFQPPKLKQMDWLVCDMVERPMRISQLIGKWLMNGWCRETIFNLKLPMKKRYHEVQLCLSLFRQLTKQGLCFKLQAKHLYHDREEITVHIVIMGKK.

S-adenosyl-L-methionine-binding positions include serine 190, 223–226 (CPGG), aspartate 242, aspartate 262, and aspartate 280. Residue lysine 309 is the Proton acceptor of the active site.

This sequence belongs to the class I-like SAM-binding methyltransferase superfamily. RNA methyltransferase RlmE family. RlmM subfamily. Monomer.

The protein resides in the cytoplasm. It catalyses the reaction cytidine(2498) in 23S rRNA + S-adenosyl-L-methionine = 2'-O-methylcytidine(2498) in 23S rRNA + S-adenosyl-L-homocysteine + H(+). Catalyzes the 2'-O-methylation at nucleotide C2498 in 23S rRNA. The protein is Ribosomal RNA large subunit methyltransferase M of Haemophilus ducreyi (strain 35000HP / ATCC 700724).